A 122-amino-acid chain; its full sequence is NLWQFENMIMKVAKKSGILSYSAYGCYCGWGGRGTPKDATDRCCFVHDCCYGKVTGCNPKLGKYTYSSENGDIICGGDGPCKEVCECDRAAAICFRDNLDTYDRKTYWKYPASNCQEDSEPC.

Intrachain disulfides connect Cys-26/Cys-115, Cys-28/Cys-44, Cys-43/Cys-94, Cys-49/Cys-122, Cys-50/Cys-87, Cys-57/Cys-81, and Cys-75/Cys-85. Ca(2+)-binding residues include Tyr-27, Gly-29, and Gly-31. The active site involves His-47. Asp-48 serves as a coordination point for Ca(2+). Residue Asp-88 is part of the active site.

It belongs to the phospholipase A2 family. Group II subfamily. D49 sub-subfamily. As to quaternary structure, homodimer. It depends on Ca(2+) as a cofactor. As to expression, expressed by the venom gland.

The protein resides in the secreted. It catalyses the reaction a 1,2-diacyl-sn-glycero-3-phosphocholine + H2O = a 1-acyl-sn-glycero-3-phosphocholine + a fatty acid + H(+). PLA2 catalyzes the calcium-dependent hydrolysis of the 2-acyl groups in 3-sn-phosphoglycerides. The polypeptide is Acidic phospholipase A2 1 (Protobothrops mucrosquamatus (Taiwan habu)).